The chain runs to 304 residues: Nucleotide-binding protein SH2124 (304 aa).

19-26 (GLSGAGKS) is an ATP binding site. 70–73 (DLRG) contributes to the GTP binding site.

It belongs to the RapZ-like family.

Functionally, displays ATPase and GTPase activities. In Staphylococcus haemolyticus (strain JCSC1435), this protein is Nucleotide-binding protein SH2124.